Reading from the N-terminus, the 957-residue chain is Glycine dehydrogenase (decarboxylating) (957 aa).

Residue Lys708 is modified to N6-(pyridoxal phosphate)lysine.

It belongs to the GcvP family. As to quaternary structure, the glycine cleavage system is composed of four proteins: P, T, L and H. Requires pyridoxal 5'-phosphate as cofactor.

It carries out the reaction N(6)-[(R)-lipoyl]-L-lysyl-[glycine-cleavage complex H protein] + glycine + H(+) = N(6)-[(R)-S(8)-aminomethyldihydrolipoyl]-L-lysyl-[glycine-cleavage complex H protein] + CO2. In terms of biological role, the glycine cleavage system catalyzes the degradation of glycine. The P protein binds the alpha-amino group of glycine through its pyridoxal phosphate cofactor; CO(2) is released and the remaining methylamine moiety is then transferred to the lipoamide cofactor of the H protein. This Shigella boydii serotype 18 (strain CDC 3083-94 / BS512) protein is Glycine dehydrogenase (decarboxylating).